Consider the following 373-residue polypeptide: Glutamate 5-kinase (373 aa).

Residue lysine 15 coordinates ATP. Positions 56, 143, and 155 each coordinate substrate. 175–176 is a binding site for ATP; the sequence is SD. The region spanning 281–358 is the PUA domain; sequence KGTLTIDAGA…PDVMTILGIS (78 aa).

The protein belongs to the glutamate 5-kinase family.

Its subcellular location is the cytoplasm. The enzyme catalyses L-glutamate + ATP = L-glutamyl 5-phosphate + ADP. It functions in the pathway amino-acid biosynthesis; L-proline biosynthesis; L-glutamate 5-semialdehyde from L-glutamate: step 1/2. Functionally, catalyzes the transfer of a phosphate group to glutamate to form L-glutamate 5-phosphate. The sequence is that of Glutamate 5-kinase from Bradyrhizobium diazoefficiens (strain JCM 10833 / BCRC 13528 / IAM 13628 / NBRC 14792 / USDA 110).